Here is a 557-residue protein sequence, read N- to C-terminus: CCR4-NOT transcription complex subunit 6 (557 aa).

LRR repeat units lie at residues 52 to 73 (HLTA…IAKL), 75 to 96 (NLVY…LGNM), 98 to 120 (SLRE…GKLF), and 121 to 143 (QLQT…YQEP). The tract at residues 153-557 (LLDNLSGTAK…VNGIHLPGRR (405 aa)) is nuclease domain. Glutamate 240 lines the Mg(2+) pocket. Positions 240, 276, 361, and 366 each coordinate substrate. Aspartate 412 lines the Mg(2+) pocket. Aspartate 412 functions as the Proton donor/acceptor in the catalytic mechanism. 3 residues coordinate substrate: asparagine 414, asparagine 481, and phenylalanine 486.

Belongs to the CCR4/nocturin family. In terms of assembly, component of the CCR4-NOT complex; distinct complexes seem to exist that differ in the participation of probably mutually exclusive catalytic subunits; the complex contains two deadenylase subunits, CNOT6 or CNOT6L, and CNOT7 or CNOT8. Interacts with CNOT7 and CNOT8. Interacts with UNR. Interacts with ZFP36L1 (via N-terminus). Interacts with ZNF335. Mg(2+) serves as cofactor.

The protein resides in the cytoplasm. It is found in the nucleus. The catalysed reaction is Exonucleolytic cleavage of poly(A) to 5'-AMP.. In terms of biological role, poly(A) nuclease with 3'-5' RNase activity. Catalytic component of the CCR4-NOT complex which is one of the major cellular mRNA deadenylases and is linked to various cellular processes including bulk mRNA degradation, miRNA-mediated repression, translational repression during translational initiation and general transcription regulation. Additional complex functions may be a consequence of its influence on mRNA expression. Involved in mRNA decay mediated by the major-protein-coding determinant of instability (mCRD) of the FOS gene in the cytoplasm. In the presence of ZNF335, enhances ligand-dependent transcriptional activity of nuclear hormone receptors, including RARA. The increase of ligand-dependent ESR1-mediated transcription is much smaller, if any. Mediates cell proliferation and cell survival and prevents cellular senescence. The polypeptide is CCR4-NOT transcription complex subunit 6 (CNOT6) (Homo sapiens (Human)).